The following is a 744-amino-acid chain: Dolasta-1(15),8-diene synthase (744 aa).

The interval methionine 1–proline 344 is terpene cyclase. Mg(2+)-binding residues include aspartate 108 and aspartate 112. Substrate contacts are provided by residues aspartate 108, aspartate 112, arginine 198 to aspartate 201, serine 246 to glutamate 250, and arginine 336 to tyrosine 337. The DDXXD motif lies at aspartate 108 to aspartate 112. The prenyltransferase stretch occupies residues arginine 345–valine 744. A disordered region spans residues tyrosine 399–threonine 422. Residues serine 409–threonine 422 show a composition bias toward basic and acidic residues. Arginine 459 and histidine 488 together coordinate isopentenyl diphosphate. Aspartate 495 and aspartate 499 together coordinate Mg(2+). Positions aspartate 495–aspartate 499 match the DDXXD motif. Arginine 504 contacts dimethylallyl diphosphate. Residue arginine 505 participates in isopentenyl diphosphate binding. Dimethylallyl diphosphate is bound by residues lysine 581, threonine 582, and glutamine 617.

In the N-terminal section; belongs to the terpene synthase family. The protein in the C-terminal section; belongs to the FPP/GGPP synthase family. As to quaternary structure, hexamer. It depends on Mg(2+) as a cofactor.

The catalysed reaction is isopentenyl diphosphate + (2E,6E)-farnesyl diphosphate = (2E,6E,10E)-geranylgeranyl diphosphate + diphosphate. It catalyses the reaction (2E,6E,10E)-geranylgeranyl diphosphate = (5R,12R,14S)-dolasta-1(15),8-diene + diphosphate. The enzyme catalyses (2E,6E,10E)-geranylgeranyl diphosphate = delta-araneosene + diphosphate. Functionally, bifunctional terpene synthase involved in the biosynthesis of the diterpenes delta-araneosene and dolasta-1(15),8-diene. The C-terminal prenyltransferase domain of CgDS catalyzes formation of the universal precursor of diterpene, geranylgeranyl diphosphate (GGPP), whereas the N-terminal terpene cyclase domain catalyzes the cyclization of GGPP to the intermediate delta-araneosene that is further converted to dolasta-1(15),8-diene in a second cyclization event. In some cases the cyclization stops at the delta-araneosene stage. The polypeptide is Dolasta-1(15),8-diene synthase (Colletotrichum gloeosporioides (Anthracnose fungus)).